The primary structure comprises 272 residues: Secretagogin (272 aa).

EF-hand domains lie at Leu-8 to Lys-43, Glu-53 to Asn-89, Asp-101 to Gln-136, Lys-145 to Phe-180, Glu-193 to Leu-228, and Asp-237 to Pro-272. Positions 21, 23, 25, 27, and 32 each coordinate Ca(2+). Ca(2+) is bound by residues Asp-114, Asp-116, Ser-118, Tyr-120, Glu-125, Asp-158, Asn-160, Asp-162, Arg-164, Asp-169, Asp-206, Ser-208, Thr-210, Glu-217, Asp-250, Asn-252, Asp-254, Lys-256, and Glu-261.

Its subcellular location is the cytoplasm. In Danio rerio (Zebrafish), this protein is Secretagogin (scgn).